A 477-amino-acid chain; its full sequence is Aspartyl/glutamyl-tRNA(Asn/Gln) amidotransferase subunit B (477 aa).

It belongs to the GatB/GatE family. GatB subfamily. As to quaternary structure, heterotrimer of A, B and C subunits.

The catalysed reaction is L-glutamyl-tRNA(Gln) + L-glutamine + ATP + H2O = L-glutaminyl-tRNA(Gln) + L-glutamate + ADP + phosphate + H(+). It carries out the reaction L-aspartyl-tRNA(Asn) + L-glutamine + ATP + H2O = L-asparaginyl-tRNA(Asn) + L-glutamate + ADP + phosphate + 2 H(+). Its function is as follows. Allows the formation of correctly charged Asn-tRNA(Asn) or Gln-tRNA(Gln) through the transamidation of misacylated Asp-tRNA(Asn) or Glu-tRNA(Gln) in organisms which lack either or both of asparaginyl-tRNA or glutaminyl-tRNA synthetases. The reaction takes place in the presence of glutamine and ATP through an activated phospho-Asp-tRNA(Asn) or phospho-Glu-tRNA(Gln). This Thioalkalivibrio sulfidiphilus (strain HL-EbGR7) protein is Aspartyl/glutamyl-tRNA(Asn/Gln) amidotransferase subunit B.